The primary structure comprises 111 residues: UPF0235 protein glr3835 (111 aa).

Belongs to the UPF0235 family.

The polypeptide is UPF0235 protein glr3835 (Gloeobacter violaceus (strain ATCC 29082 / PCC 7421)).